Consider the following 391-residue polypeptide: Galactarate dehydratase (D-threo-forming) (391 aa).

Position 15 (arginine 15) interacts with substrate. Aspartate 42 and histidine 45 together coordinate Mg(2+). Residue tyrosine 89 participates in substrate binding. Tyrosine 90 functions as the Proton donor in the catalytic mechanism. Residue tyrosine 164 is the Proton acceptor of the active site. Residues aspartate 193, glutamate 221, and histidine 246 each coordinate Mg(2+). Threonine 296 contacts substrate. Residue threonine 297 coordinates Mg(2+). A substrate-binding site is contributed by arginine 385.

It belongs to the mandelate racemase/muconate lactonizing enzyme family. It depends on Mg(2+) as a cofactor.

The catalysed reaction is galactarate = (2S,3R)-dihydroxy-5-oxohexanedioate + H2O. Functionally, catalyzes the regioselective dehydration of galactarate into 2-keto-D-threo-4,5-dihydroxyadipate ((2S,3R)-dihydroxy-5-oxohexanedioate). Is not active on other acid sugars. The sequence is that of Galactarate dehydratase (D-threo-forming) from Oceanobacillus iheyensis (strain DSM 14371 / CIP 107618 / JCM 11309 / KCTC 3954 / HTE831).